A 459-amino-acid polypeptide reads, in one-letter code: Chromosomal replication initiator protein DnaA (459 aa).

The tract at residues 1 to 74 (MQKIETFWYF…DEMAQGHFNE (74 aa)) is domain I, interacts with DnaA modulators. The segment at 74–122 (EKIHFKLELKDPAEIKTATIKAPEPKSKEDKKPPTDKAHGTTARKTNPS) is domain II. A disordered region spans residues 91 to 123 (ATIKAPEPKSKEDKKPPTDKAHGTTARKTNPSR). Residues 96–112 (PEPKSKEDKKPPTDKAH) are compositionally biased toward basic and acidic residues. The segment at 123-339 (RLNPAFTFDA…GALKRVLAYS (217 aa)) is domain III, AAA+ region. ATP is bound by residues Gly167, Gly169, Lys170, and Thr171. Positions 340 to 459 (RFTGHPISLD…YSTLIHILRG (120 aa)) are domain IV, binds dsDNA.

Belongs to the DnaA family. Oligomerizes as a right-handed, spiral filament on DNA at oriC.

It is found in the cytoplasm. Plays an essential role in the initiation and regulation of chromosomal replication. ATP-DnaA binds to the origin of replication (oriC) to initiate formation of the DNA replication initiation complex once per cell cycle. Binds the DnaA box (a 9 base pair repeat at the origin) and separates the double-stranded (ds)DNA. Forms a right-handed helical filament on oriC DNA; dsDNA binds to the exterior of the filament while single-stranded (ss)DNA is stabiized in the filament's interior. The ATP-DnaA-oriC complex binds and stabilizes one strand of the AT-rich DNA unwinding element (DUE), permitting loading of DNA polymerase. After initiation quickly degrades to an ADP-DnaA complex that is not apt for DNA replication. Binds acidic phospholipids. In Nitrosomonas eutropha (strain DSM 101675 / C91 / Nm57), this protein is Chromosomal replication initiator protein DnaA.